A 397-amino-acid chain; its full sequence is Purine ribonucleoside efflux pump NepI (397 aa).

The Cytoplasmic segment spans residues 1–21 (MNENIAEKFRADGVARPNWSA). The helical transmembrane segment at 22–42 (VFAVAFCVACLITVEFLPVSL) threads the bilayer. At 43–54 (LTPMAQDLGISE) the chain is on the periplasmic side. Residues 55-75 (GVAGQSVTVTAFVAMFSSLFI) traverse the membrane as a helical segment. At 76–85 (TQIIQATDRR) the chain is on the cytoplasmic side. Residues 86 to 106 (YIVILFAVLLTASCLMVSFAN) traverse the membrane as a helical segment. A topological domain (periplasmic) is located at residue Ser-107. Residues 108–128 (FTLLLLGRACLGLALGGFWAM) traverse the membrane as a helical segment. The Cytoplasmic portion of the chain corresponds to 129-147 (SASLTMRLVPARTVPKALS). The helical transmembrane segment at 148 to 168 (VIFGAVSIALVIAAPLGSFLG) threads the bilayer. The Periplasmic segment spans residues 169 to 175 (GIIGWRN). The chain crosses the membrane as a helical span at residues 176 to 196 (VFNAAAVMGVLCVIWVVKSLP). The Cytoplasmic segment spans residues 197 to 215 (SLPGEPSHQKQNMFSLLQR). Residues 216–236 (PGVMAGMIAIFMSFAGQFAFF) form a helical membrane-spanning segment. Residues 237–255 (TYIRPVYMNLAGFDVDGLT) are Periplasmic-facing. The helical transmembrane segment at 256-276 (LVLLSFGIASFVGTSFSSYVL) threads the bilayer. Topologically, residues 277–281 (KRSVK) are cytoplasmic. The helical transmembrane segment at 282 to 302 (LALAGAPLLLALSALTLIVWG) threads the bilayer. The Periplasmic portion of the chain corresponds to 303-305 (SDK). The chain crosses the membrane as a helical span at residues 306 to 326 (TVAAAIAIIWGLAFALVPVGW). The Cytoplasmic portion of the chain corresponds to 327–343 (STWITRSLADQAEKAGS). Residues 344-364 (IQVAVIQLANTCGAAVGGYAL) form a helical membrane-spanning segment. Residues 365–366 (DN) are Periplasmic-facing. A helical transmembrane segment spans residues 367 to 387 (FGLLSPLALSGGLMLLTALVV). The Cytoplasmic segment spans residues 388 to 397 (AAKVRITPMS).

The protein belongs to the major facilitator superfamily. DHA1 family. NepI (TC 2.A.1.2.26) subfamily.

It is found in the cell inner membrane. It catalyses the reaction inosine(in) + H(+)(out) = inosine(out) + H(+)(in). The catalysed reaction is guanosine(in) + H(+)(out) = guanosine(out) + H(+)(in). Involved in the efflux of purine ribonucleosides, such as inosine and guanosine. This Salmonella choleraesuis (strain SC-B67) protein is Purine ribonucleoside efflux pump NepI.